The following is a 215-amino-acid chain: Nucleoredoxin-like protein 1 (215 aa).

Residues 1–165 (MADLFLDKIL…VSEIIDRSFL (165 aa)) enclose the Thioredoxin; atypical domain. The segment covering 185 to 194 (IKYKDETTNE) has biased composition (basic and acidic residues). A disordered region spans residues 185–215 (IKYKDETTNEKKKRKHCDDEDEGGGGGTEFF).

The protein belongs to the nucleoredoxin family.

Its subcellular location is the cell projection. It is found in the cilium. The protein resides in the photoreceptor outer segment. Plays an important role in retinal cone photoreceptor survival. May play a role in cone cell viability, slowing down cone degeneration, does not seem to play a role in degenerating rods. The chain is Nucleoredoxin-like protein 1 (nxnl1) from Xenopus laevis (African clawed frog).